The chain runs to 1775 residues: ATP-dependent RNA helicase DEAH12, chloroplastic (1775 aa).

The N-terminal 33 residues, 1-33 (MRNSFPPSDGGRSATDRRQQSSHSSSTNRYNSR), are a transit peptide targeting the chloroplast. The disordered stretch occupies residues 1–77 (MRNSFPPSDG…NPSSGYSPPV (77 aa)). Over residues 21–34 (SSHSSSTNRYNSRS) the composition is skewed to low complexity. A compositionally biased stretch (polar residues) spans 35–60 (AQSSPPLNHRPTWNQQHSQYPNSNFP). The 165-residue stretch at 316 to 480 (LKKIHREQIM…FFSCGILLVN (165 aa)) folds into the Helicase ATP-binding domain. 329–336 (GETGSGKS) lines the ATP pocket. Positions 427–430 (DEAH) match the DEAH box motif. One can recognise a Helicase C-terminal domain in the interval 510-676 (DVVKMAVEIH…VALLRMLALG (167 aa)). A TRIAD supradomain region spans residues 1560–1767 (IEVECPICLS…EPCYAHLRTI (208 aa)). The Zn(2+) site is built by Cys-1564, Cys-1567, Cys-1580, His-1582, Cys-1585, Cys-1588, Cys-1607, Cys-1612, Cys-1652, Cys-1657, Cys-1675, Cys-1678, Cys-1683, Cys-1686, His-1691, Cys-1696, Cys-1722, and Cys-1725. An RING-type 1 zinc finger spans residues 1564–1612 (CPICLSEVDDGYSLEGCSHLFCKACLLEQFEASMRNFDAFPILCSHIDC). An IBR-type zinc finger spans residues 1631–1696 (DELFSASLSS…HLEYHPLITC (66 aa)). Residues 1722–1750 (CPICKSTIEKTDGCNHMKCRCGKHICWTC) form an RING-type 2; atypical zinc finger. Cys-1735 is an active-site residue. Zn(2+)-binding residues include Cys-1740 and Cys-1742.

The protein belongs to the DEAD box helicase family. DEAH subfamily.

The protein localises to the plastid. The protein resides in the chloroplast. It catalyses the reaction ATP + H2O = ADP + phosphate + H(+). The chain is ATP-dependent RNA helicase DEAH12, chloroplastic from Arabidopsis thaliana (Mouse-ear cress).